The chain runs to 456 residues: Bifunctional protein GlmU (456 aa).

A pyrophosphorylase region spans residues 1 to 229; sequence MLNVVILAAG…GWETLGVNSR (229 aa). UDP-N-acetyl-alpha-D-glucosamine-binding positions include 7 to 10, Lys-21, Gln-73, 78 to 79, 103 to 105, Gly-139, Glu-154, Asn-169, and Asn-227; these read LAAG, GT, and YGD. Asp-105 is a Mg(2+) binding site. Asn-227 contacts Mg(2+). Positions 230–250 are linker; sequence VQQAELERRWQQEQARRQLEA. The tract at residues 251-456 is N-acetyltransferase; sequence GVTLADPARF…EGWQRPQKKS (206 aa). UDP-N-acetyl-alpha-D-glucosamine is bound by residues Arg-333 and Lys-351. His-363 acts as the Proton acceptor in catalysis. UDP-N-acetyl-alpha-D-glucosamine contacts are provided by Tyr-366 and Asn-377. Acetyl-CoA is bound by residues Ala-380, 386–387, Ser-405, Ala-423, and Arg-440; that span reads NY.

This sequence in the N-terminal section; belongs to the N-acetylglucosamine-1-phosphate uridyltransferase family. In the C-terminal section; belongs to the transferase hexapeptide repeat family. Homotrimer. Mg(2+) serves as cofactor.

Its subcellular location is the cytoplasm. The catalysed reaction is alpha-D-glucosamine 1-phosphate + acetyl-CoA = N-acetyl-alpha-D-glucosamine 1-phosphate + CoA + H(+). It carries out the reaction N-acetyl-alpha-D-glucosamine 1-phosphate + UTP + H(+) = UDP-N-acetyl-alpha-D-glucosamine + diphosphate. The protein operates within nucleotide-sugar biosynthesis; UDP-N-acetyl-alpha-D-glucosamine biosynthesis; N-acetyl-alpha-D-glucosamine 1-phosphate from alpha-D-glucosamine 6-phosphate (route II): step 2/2. Its pathway is nucleotide-sugar biosynthesis; UDP-N-acetyl-alpha-D-glucosamine biosynthesis; UDP-N-acetyl-alpha-D-glucosamine from N-acetyl-alpha-D-glucosamine 1-phosphate: step 1/1. It participates in bacterial outer membrane biogenesis; LPS lipid A biosynthesis. Catalyzes the last two sequential reactions in the de novo biosynthetic pathway for UDP-N-acetylglucosamine (UDP-GlcNAc). The C-terminal domain catalyzes the transfer of acetyl group from acetyl coenzyme A to glucosamine-1-phosphate (GlcN-1-P) to produce N-acetylglucosamine-1-phosphate (GlcNAc-1-P), which is converted into UDP-GlcNAc by the transfer of uridine 5-monophosphate (from uridine 5-triphosphate), a reaction catalyzed by the N-terminal domain. This chain is Bifunctional protein GlmU, found in Bordetella petrii (strain ATCC BAA-461 / DSM 12804 / CCUG 43448).